A 253-amino-acid chain; its full sequence is UPF0246 protein lhv_1883 (253 aa).

It belongs to the UPF0246 family.

The polypeptide is UPF0246 protein lhv_1883 (Lactobacillus helveticus (strain DPC 4571)).